A 79-amino-acid chain; its full sequence is Dolichyl-diphosphooligosaccharide--protein glycosyltransferase subunit TMEM258 (79 aa).

Methionine 1 carries the post-translational modification N-acetylmethionine. The Lumenal segment spans residues 1 to 16 (MELEAMSRYTSPVNPA). A helical transmembrane segment spans residues 17 to 37 (VFPHLTVVLLAIGMFFTAWFF). Residues 38–54 (VYEVTSTKYTRDICKEL) are Cytoplasmic-facing. Residues 55–75 (LISLVASLFMGFGVLFLLLWV) form a helical membrane-spanning segment. The Lumenal portion of the chain corresponds to 76 to 79 (GIYV).

This sequence belongs to the OST5 family. As to quaternary structure, component of the oligosaccharyltransferase (OST) complex. OST exists in two different complex forms which contain common core subunits RPN1, RPN2, OST48, OST4, DAD1 and TMEM258, either STT3A or STT3B as catalytic subunits, and form-specific accessory subunits. STT3A complex assembly occurs through the formation of 3 subcomplexes. Subcomplex 1 contains RPN1 and TMEM258, subcomplex 2 contains the STT3A-specific subunits STT3A, DC2/OSTC, and KCP2 as well as the core subunit OST4, and subcomplex 3 contains RPN2, DAD1, and OST48. The STT3A complex can form stable complexes with the Sec61 complex or with both the Sec61 and TRAP complexes.

Its subcellular location is the membrane. The protein localises to the endoplasmic reticulum. It localises to the cytoplasm. It functions in the pathway protein modification; protein glycosylation. Functionally, subunit of the oligosaccharyl transferase (OST) complex that catalyzes the initial transfer of a defined glycan (Glc(3)Man(9)GlcNAc(2) in eukaryotes) from the lipid carrier dolichol-pyrophosphate to an asparagine residue within an Asn-X-Ser/Thr consensus motif in nascent polypeptide chains, the first step in protein N-glycosylation. N-glycosylation occurs cotranslationally and the complex associates with the Sec61 complex at the channel-forming translocon complex that mediates protein translocation across the endoplasmic reticulum (ER). All subunits are required for a maximal enzyme activity. This is Dolichyl-diphosphooligosaccharide--protein glycosyltransferase subunit TMEM258 from Canis lupus familiaris (Dog).